Consider the following 274-residue polypeptide: Eukaryotic translation initiation factor 3 subunit G (274 aa).

The RRM domain occupies 192-270 (TAIRISNLSN…LILNVEWSKP (79 aa)).

It belongs to the eIF-3 subunit G family. In terms of assembly, component of the eukaryotic translation initiation factor 3 (eIF-3) complex.

It localises to the cytoplasm. Functionally, RNA-binding component of the eukaryotic translation initiation factor 3 (eIF-3) complex, which is involved in protein synthesis of a specialized repertoire of mRNAs and, together with other initiation factors, stimulates binding of mRNA and methionyl-tRNAi to the 40S ribosome. The eIF-3 complex specifically targets and initiates translation of a subset of mRNAs involved in cell proliferation. This subunit can bind 18S rRNA. The sequence is that of Eukaryotic translation initiation factor 3 subunit G from Bombyx mori (Silk moth).